A 313-amino-acid chain; its full sequence is Ribosomal protein L11 methyltransferase (313 aa).

S-adenosyl-L-methionine contacts are provided by threonine 164, glycine 185, aspartate 207, and asparagine 249.

It belongs to the methyltransferase superfamily. PrmA family.

The protein localises to the cytoplasm. It carries out the reaction L-lysyl-[protein] + 3 S-adenosyl-L-methionine = N(6),N(6),N(6)-trimethyl-L-lysyl-[protein] + 3 S-adenosyl-L-homocysteine + 3 H(+). In terms of biological role, methylates ribosomal protein L11. In Clostridium perfringens (strain 13 / Type A), this protein is Ribosomal protein L11 methyltransferase.